We begin with the raw amino-acid sequence, 375 residues long: Amylovoran biosynthesis protein AmsC (375 aa).

9 helical membrane passes run 2 to 22 (AIYW…LAMI), 31 to 51 (KILI…FAGI), 93 to 113 (MVLA…LLFI), 162 to 182 (IAFI…FIVL), 208 to 228 (LPLV…KKLF), 256 to 276 (VFGL…LYYF), 287 to 307 (VYIL…FSDF), 309 to 329 (IFGG…FAFL), and 337 to 357 (LLNF…NTIL).

The protein localises to the cell membrane. It functions in the pathway glycan metabolism; exopolysaccharide biosynthesis. Involved in the biosynthesis of amylovoran which functions as a virulence factor. This Erwinia amylovora (Fire blight bacteria) protein is Amylovoran biosynthesis protein AmsC (amsC).